The chain runs to 292 residues: tRNA pseudouridine synthase B (292 aa).

The active-site Nucleophile is the D38.

This sequence belongs to the pseudouridine synthase TruB family. Type 1 subfamily.

It carries out the reaction uridine(55) in tRNA = pseudouridine(55) in tRNA. Responsible for synthesis of pseudouridine from uracil-55 in the psi GC loop of transfer RNAs. This Streptococcus pneumoniae serotype 2 (strain D39 / NCTC 7466) protein is tRNA pseudouridine synthase B.